The chain runs to 277 residues: Antigen 1 (277 aa).

Positions 1-16 (MQLLALTLALCASIAA) are cleaved as a signal peptide. Asparagine 41, asparagine 71, asparagine 127, and asparagine 200 each carry an N-linked (GlcNAc...) asparagine glycan. Positions 230–277 (CVGGEEENDGQGEEQTEEPAQDDQQDEAAEEEIPENCHTHEGGELHCT) are disordered. A compositionally biased stretch (acidic residues) spans 233–263 (GEEENDGQGEEQTEEPAQDDQQDEAAEEEIP). The segment covering 264–277 (ENCHTHEGGELHCT) has biased composition (basic and acidic residues).

This sequence belongs to the ZPS1 family.

The chain is Antigen 1 (aspnd1) from Emericella nidulans (strain FGSC A4 / ATCC 38163 / CBS 112.46 / NRRL 194 / M139) (Aspergillus nidulans).